The primary structure comprises 463 residues: L-seryl-tRNA(Sec) selenium transferase (463 aa).

Lys295 bears the N6-(pyridoxal phosphate)lysine mark.

It belongs to the SelA family. Homodecamer; pentamer of dimers. Binds only one seryl-tRNA(Sec) per dimer. Requires pyridoxal 5'-phosphate as cofactor.

Its subcellular location is the cytoplasm. The catalysed reaction is L-seryl-tRNA(Sec) + selenophosphate + H(+) = L-selenocysteinyl-tRNA(Sec) + phosphate. The protein operates within aminoacyl-tRNA biosynthesis; selenocysteinyl-tRNA(Sec) biosynthesis; selenocysteinyl-tRNA(Sec) from L-seryl-tRNA(Sec) (bacterial route): step 1/1. Functionally, converts seryl-tRNA(Sec) to selenocysteinyl-tRNA(Sec) required for selenoprotein biosynthesis. The sequence is that of L-seryl-tRNA(Sec) selenium transferase from Salmonella arizonae (strain ATCC BAA-731 / CDC346-86 / RSK2980).